An 854-amino-acid chain; its full sequence is MASEGPREPESEGIKLSADVKPFVPRFAGLNVAWLESSEACVFPSSAATYYPFVQEPPVTEQKIYTEDMAFGASTFPPQYLSSEITLHPYAYSPYTLDSTQNVYSVPGSQYLYNQPSCYRGFQTVKHRNENTCPLPQEMKALFKKKTYDEKKTYDQQKFDSERADGTISSEIKSARGSHHLSIYAENSLKSDGYHKRTDRKSRIIAKNVSTSKPEFEFTTLDFPELQGAENNMSEIQKQPKWGPVHSVSTDISLLREVVKPAAVLSKGEIVVKNNPNESVTANAATNSPSCTRELSWTPMGYVVRQTLSTELSAAPKNVTSMINLKTIASSADPKNVSIPSSEALSSDPSYNKEKHIIHPTQKSKASQGSDLEQNEASRKNKKKKEKSTSKYEVLTVQEPPRIEDAEEFPNLAVASERRDRIETPKFQSKQQPQDNFKNNVKKSQLPVQLDLGGMLTALEKKQHSQHAKQSSKPVVVSVGAVPVLSKECASGERGRRMSQMKTPHNPLDSSAPLMKKGKQREIPKAKKPTSLKKIILKERQERKQRLQENAVSPAFTSDDTQDGESGGDDQFPEQAELSGPEGMDELISTPSVEDKSEEPPGTELQRDTEASHLAPNHTTFPKIHSRRFRDYCSQMLSKEVDACVTDLLKELVRFQDRMYQKDPVKAKTKRRLVLGLREVLKHLKLKKLKCVIISPNCEKIQSKGGLDDTLHTIIDYACEQNIPFVFALNRKALGRSLNKAVPVSVVGIFSYDGAQDQFHKMVELTVAARQAYKTMLENVQQELVGEPRPQAPPSLPTQGPSCPAEDGPPALKEKEEPHYIEIWKKHLEAYSGCTLELEESLEASTSQMMNLNL.

4 disordered regions span residues 332-351 (ADPK…DPSY), 356-394 (HIIH…KYEV), 417-445 (ERRD…KKSQ), and 488-619 (ECAS…PNHT). Composition is skewed to polar residues over residues 338–350 (SIPS…SDPS) and 361–372 (TQKSKASQGSDL). Residues 380–387 (KNKKKKEK) carry the Nuclear localization signal motif. Polar residues predominate over residues 426–445 (KFQSKQQPQDNFKNNVKKSQ). Basic and acidic residues predominate over residues 536–547 (ILKERQERKQRL). Positions 548–559 (QENAVSPAFTSD) are enriched in polar residues. Over residues 560-572 (DTQDGESGGDDQF) the composition is skewed to acidic residues. A compositionally biased stretch (basic and acidic residues) spans 593-611 (VEDKSEEPPGTELQRDTEA). Residues 673-694 (LVLGLREVLKHLKLKKLKCVII) are RNA-binding. The segment at 787-812 (EPRPQAPPSLPTQGPSCPAEDGPPAL) is disordered.

In terms of tissue distribution, expressed at high levels in testis.

Its subcellular location is the nucleus. The protein resides in the mitochondrion. In terms of biological role, mRNA-binding protein that binds to the SECIS (selenocysteine insertion sequence) element present in the 3'-UTR of mRNAs encoding selenoproteins and facilitates the incorporation of the rare amino acid selenocysteine. Insertion of selenocysteine at UGA codons is mediated by SECISBP2 and EEFSEC: SECISBP2 (1) specifically binds the SECIS sequence once the 80S ribosome encounters an in-frame UGA codon and (2) contacts the RPS27A/eS31 of the 40S ribosome before ribosome stalling. (3) GTP-bound EEFSEC then delivers selenocysteinyl-tRNA(Sec) to the 80S ribosome and adopts a preaccommodated state conformation. (4) After GTP hydrolysis, EEFSEC dissociates from the assembly, selenocysteinyl-tRNA(Sec) accommodates, and peptide bond synthesis and selenoprotein elongation occur. In Homo sapiens (Human), this protein is Selenocysteine insertion sequence-binding protein 2.